The sequence spans 118 residues: Large ribosomal subunit protein uL18 (118 aa).

Positions 1–26 (MISKPDKNKIRQKRHRRVRGKLSGTA) are disordered. Residues 10–20 (IRQKRHRRVRG) are compositionally biased toward basic residues.

Belongs to the universal ribosomal protein uL18 family. Part of the 50S ribosomal subunit; part of the 5S rRNA/L5/L18/L25 subcomplex. Contacts the 5S and 23S rRNAs.

Functionally, this is one of the proteins that bind and probably mediate the attachment of the 5S RNA into the large ribosomal subunit, where it forms part of the central protuberance. The polypeptide is Large ribosomal subunit protein uL18 (Streptococcus equi subsp. zooepidemicus (strain H70)).